We begin with the raw amino-acid sequence, 326 residues long: tRNA uridine(34) hydroxylase (326 aa).

Residues Ser123–Ser217 form the Rhodanese domain. The Cysteine persulfide intermediate role is filled by Cys177.

The protein belongs to the TrhO family.

It catalyses the reaction uridine(34) in tRNA + AH2 + O2 = 5-hydroxyuridine(34) in tRNA + A + H2O. Functionally, catalyzes oxygen-dependent 5-hydroxyuridine (ho5U) modification at position 34 in tRNAs. The sequence is that of tRNA uridine(34) hydroxylase from Shewanella denitrificans (strain OS217 / ATCC BAA-1090 / DSM 15013).